The following is a 37-amino-acid chain: KSTSCMEAGSYCGSTTRICCGYCAYSASKNVCDYPSN.

Residues Lys1–Ser4 constitute a propeptide that is removed on maturation. 3 cysteine pairs are disulfide-bonded: Cys5–Cys20, Cys12–Cys23, and Cys19–Cys32.

This sequence belongs to the conotoxin O1 superfamily. As to expression, expressed by the venom duct.

It is found in the secreted. Its function is as follows. Omega-conotoxins act at presynaptic membranes, they bind and block voltage-gated calcium channels (Cav). This toxin blocks N-, P- and Q-type calcium channels. In Conus striatus (Striated cone), this protein is Omega-conotoxin-like S6.7.